The following is a 513-amino-acid chain: ATP synthase subunit alpha (513 aa).

ATP is bound at residue 169-176 (GDRQTGKT).

This sequence belongs to the ATPase alpha/beta chains family. F-type ATPases have 2 components, CF(1) - the catalytic core - and CF(0) - the membrane proton channel. CF(1) has five subunits: alpha(3), beta(3), gamma(1), delta(1), epsilon(1). CF(0) has three main subunits: a(1), b(2) and c(9-12). The alpha and beta chains form an alternating ring which encloses part of the gamma chain. CF(1) is attached to CF(0) by a central stalk formed by the gamma and epsilon chains, while a peripheral stalk is formed by the delta and b chains.

The protein localises to the cell inner membrane. It catalyses the reaction ATP + H2O + 4 H(+)(in) = ADP + phosphate + 5 H(+)(out). Its function is as follows. Produces ATP from ADP in the presence of a proton gradient across the membrane. The alpha chain is a regulatory subunit. The polypeptide is ATP synthase subunit alpha (Actinobacillus pleuropneumoniae serotype 7 (strain AP76)).